We begin with the raw amino-acid sequence, 605 residues long: Elongation factor 4 (605 aa).

One can recognise a tr-type G domain in the interval 11–193 (KRIRNFSIIA…QIVTRISPPQ (183 aa)). Residues 23-28 (DHGKST) and 140-143 (NKVD) each bind GTP.

The protein belongs to the TRAFAC class translation factor GTPase superfamily. Classic translation factor GTPase family. LepA subfamily.

The protein resides in the cell membrane. The catalysed reaction is GTP + H2O = GDP + phosphate + H(+). Required for accurate and efficient protein synthesis under certain stress conditions. May act as a fidelity factor of the translation reaction, by catalyzing a one-codon backward translocation of tRNAs on improperly translocated ribosomes. Back-translocation proceeds from a post-translocation (POST) complex to a pre-translocation (PRE) complex, thus giving elongation factor G a second chance to translocate the tRNAs correctly. Binds to ribosomes in a GTP-dependent manner. The sequence is that of Elongation factor 4 from Onion yellows phytoplasma (strain OY-M).